The chain runs to 402 residues: Subtilisin-like protease 9 (402 aa).

A signal peptide spans 1-18 (MGFFRILFSLSLCALSLA). Residues 19-120 (IPSKLIGLEN…VEVDRVVKLD (102 aa)) constitute a propeptide that is removed on maturation. Positions 36–119 (SYIVVMKSAV…YVEVDRVVKL (84 aa)) constitute an Inhibitor I9 domain. A Peptidase S8 domain is found at 130–402 (SWGLGRISHR…KKLLYNGSGA (273 aa)). Catalysis depends on charge relay system residues D162 and H193. The N-linked (GlcNAc...) asparagine glycan is linked to N254. S348 serves as the catalytic Charge relay system. Residues N390 and N398 are each glycosylated (N-linked (GlcNAc...) asparagine).

Belongs to the peptidase S8 family.

Its subcellular location is the secreted. Its function is as follows. Secreted subtilisin-like serine protease with keratinolytic activity that contributes to pathogenicity. This is Subtilisin-like protease 9 (SUB9) from Arthroderma gypseum (strain ATCC MYA-4604 / CBS 118893) (Microsporum gypseum).